The primary structure comprises 151 residues: UPF0208 membrane protein YfbV (151 aa).

Transmembrane regions (helical) follow at residues 46-65 (FGIRFMPPLAIFTLTWQIAL) and 69-91 (LGPAVATALFACSLPMQGLWWLG).

This sequence belongs to the UPF0208 family.

It is found in the cell inner membrane. This Photorhabdus temperata protein is UPF0208 membrane protein YfbV (yfbV).